The following is a 359-amino-acid chain: MDPLGPAKPQWSCRCCLTTLLFQLLVAVCFFSYLRVSRDDPTVYPNGSRFPDSTGTPARSIPLILLWTWPFNKPTALPRCSEMLPGTADCNITADRKVYPQADAVIVHHREVMYNPSAQLPRSPRRQGQRWIWFSMESPSHCWQLKAMDGYFNLTMSYRSDSDIFTPYGWLEPWSGQPAHPPLNLSAKTELVAWAVSGWGPNSARVRYYQSLQAHLKVDVYGRSHKSLPQGTMMETLSRYKFYLAFENSLHPDYITEKLWRNALEAWAVPVVLGPSRSNYERFLPPDAFIHVDDFQSPKDLARYLQELDKDHARYLSYFGWRETLRPRSFSWALAFCKACWKLQEESRYQTRSITAWFT.

The Cytoplasmic segment spans residues 1-14 (MDPLGPAKPQWSCR). A helical; Signal-anchor for type II membrane protein transmembrane segment spans residues 15 to 34 (CCLTTLLFQLLVAVCFFSYL). Residues 35–359 (RVSRDDPTVY…QTRSITAWFT (325 aa)) lie on the Lumenal side of the membrane. Asparagine 46, asparagine 91, asparagine 153, and asparagine 184 each carry an N-linked (GlcNAc...) asparagine glycan. Positions 73 to 112 (KPTALPRCSEMLPGTADCNITADRKVYPQADAVIVHHREV) are determines site-specific fucosylation.

Belongs to the glycosyltransferase 10 family. In terms of assembly, homodimer and monomer. Monomer (secreted form). In terms of processing, N-glycosylated. Post-translationally, proteolytic cleavage releases a secreted glycoform of 43 kDa.

The protein resides in the golgi apparatus. The protein localises to the golgi stack membrane. Its subcellular location is the secreted. The catalysed reaction is a beta-D-galactosyl-(1-&gt;4)-N-acetyl-beta-D-glucosaminyl derivative + GDP-beta-L-fucose = a beta-D-galactosyl-(1-&gt;4)-[alpha-L-fucosyl-(1-&gt;3)]-N-acetyl-beta-D-glucosaminyl derivative + GDP + H(+). It carries out the reaction an N-acetyl-alpha-neuraminyl-(2-&gt;3)-beta-D-galactosyl-(1-&gt;4)-N-acetyl-beta-D-glucosaminyl derivative + GDP-beta-L-fucose = an alpha-Neu5Ac-(2-&gt;3)-beta-D-Gal-(1-&gt;4)-[alpha-L-Fuc-(1-&gt;3)]-beta-D-GlcNAc derivative + GDP + H(+). It catalyses the reaction an alpha-Neu5Ac-(2-&gt;3)-beta-D-Gal-(1-&gt;4)-beta-D-GlcNAc-(1-&gt;3)-beta-D-Gal-(1-&gt;4)-[alpha-L-Fuc-(1-&gt;3)]-beta-D-GlcNAc derivative + GDP-beta-L-fucose = an alpha-Neu5Ac-(2-&gt;3)-beta-D-Gal-(1-&gt;4)-[alpha-L-Fuc-(1-&gt;3)]-beta-D-GlcNAc-(1-&gt;3)-beta-D-Gal-(1-&gt;4)-[alpha-L-Fuc-(1-&gt;3)]-beta-D-GlcNAc derivative + GDP + H(+). The enzyme catalyses a neolactoside nLc6Cer + GDP-beta-L-fucose = beta-D-Gal-(1-&gt;4)-[alpha-L-Fuc-(1-&gt;3)]-beta-D-GlcNAc-(1-&gt;3)-beta-D-Gal-(1-&gt;4)-beta-D-GlcNAc-(1-&gt;3)-beta-D-Gal-(1-&gt;4)-beta-D-Glc-(1&lt;-&gt;1')-Cer + GDP + H(+). The catalysed reaction is a neolactoside nLc6Cer + GDP-beta-L-fucose = beta-D-galactosyl-(1-&gt;4)-N-acetyl-beta-D-glucosaminyl-(1-&gt;3)-beta-D-galactosyl-(1-&gt;4)-[alpha-L-fucosyl-(1-&gt;3)]-N-acetyl-beta-D-glucosaminyl-(1-&gt;3)-beta-D-galactosyl-(1-&gt;4)-beta-D-glucosyl-(1&lt;-&gt;1')-ceramide + GDP + H(+). It carries out the reaction a neolactoside VI(3)-alpha-NeuNAc-nLc6Cer + GDP-beta-L-fucose = a neolactoside VI(3)-alpha-NeuAc,V(3)-alphaFuc-nLc6Cer + GDP + H(+). It catalyses the reaction beta-D-galactosyl-(1-&gt;4)-N-acetyl-D-glucosamine + GDP-beta-L-fucose = beta-D-galactosyl-(1-&gt;4)-[alpha-L-fucosyl-(1-&gt;3)]-N-acetyl-D-glucosamine + GDP + H(+). The enzyme catalyses N-acetyl-alpha-neuraminosyl-(2-&gt;3)-beta-D-galactosyl-(1-&gt;4)-N-acetyl-beta-D-glucosamine + GDP-beta-L-fucose = N-acetyl-alpha-neuraminosyl-(2-&gt;3)-beta-D-galactosyl-(1-&gt;4)-[alpha-L-fucosyl-(1-&gt;3)]-N-acetyl-beta-D-glucosamine + GDP + H(+). The catalysed reaction is lactose + GDP-beta-L-fucose = beta-D-galactosyl-(1-&gt;4)-[alpha-L-fucosyl-(1-&gt;3)]-D-glucose + GDP + H(+). It carries out the reaction alpha-L-Fuc-(1-&gt;2)-beta-D-Gal-(1-&gt;4)-D-Glc + GDP-beta-L-fucose = alpha-L-Fuc-(1-&gt;2)-beta-D-Gal-(1-&gt;4)-[alpha-L-Fuc-(1-&gt;3)]-D-Glc + GDP + H(+). It catalyses the reaction a beta-D-galactosyl-(1-&gt;4)-N-acetyl-beta-D-6-sulfooxy-glucosaminyl derivative + GDP-beta-L-fucose = a beta-D-galactosyl-(1-&gt;4)-[alpha-L-fucosyl-(1-&gt;3)]-N-acetyl-beta-D-6-sulfooxy-glucosaminyl derivative + GDP + H(+). It participates in protein modification; protein glycosylation. Its function is as follows. Catalyzes the transfer of L-fucose, from a guanosine diphosphate-beta-L-fucose, to the N-acetyl glucosamine (GlcNAc) of a distal alpha2,3 sialylated lactosamine unit of a glycoprotein- or glycolipid-linked sialopolylactosamines chain or of a distal or internal lactosamine unit of a neutral glycoprotein- or glycolipid-linked polylactosamines chain through an alpha-1,3 glycosidic linkage and participates in surface expression of the sialyl Lewis X (sLe(x)), Lewis X (Le(x)) and non sialylated VIM2 determinants. Moreover transfers fucose to H-type 2 (Fucalpha1-2Galbeta1-4GlcNAc) chain acceptor substrates and participates in difucosylated sialyl Lewis x determinants. Also fucosylates a polylactosamine substrate having a 6 sulfate modification at the GlcNAc moiety and gives rise to sialyl and non-sialyl 6-sulfo lewis X. Does not have activity towards type 1 ((Galbeta1-3GlcNAc)) and H-type 1 chain (Fucalpha1-2Galbeta1-3GlcNAc) acceptors substrates. This is 4-galactosyl-N-acetylglucosaminide 3-alpha-L-fucosyltransferase FUT6 from Gorilla gorilla gorilla (Western lowland gorilla).